The chain runs to 259 residues: MLIKEYRMVLPLTVEEYQIAQLYMVAKKSKESTKGGEGIEIIKNEPFDNEKGKGQYTEKIIYLANSLPRFAAAILPSSALKIEEKAWNAYPYCKTEYSCPFFGEKLVLSIESMHLPGRGEVENALKCDAETLKQRHVDFIDIANDQPKEYIKEEDPKIFKSVKTERGPLDDPKWRDKVEPVMTCYKLVHAEFKYWGFQTKVENVIQDTGVRDVLLKAHRALFCWIDEWFGLTIEDIRKIEEETKAELAKKLEENKAANK.

Residues 231–259 (LTIEDIRKIEEETKAELAKKLEENKAANK) adopt a coiled-coil conformation.

The protein belongs to the PtdIns transfer protein family. PI transfer class IIA subfamily.

Its subcellular location is the cytoplasm. It is found in the golgi apparatus. Catalyzes the transfer of PtdIns and phosphatidylcholine between membranes. This is Phosphatidylinositol transfer protein 2 (pitB) from Dictyostelium discoideum (Social amoeba).